The following is a 774-amino-acid chain: DNA ligase 3 (774 aa).

The tract at residues 1–25 (MPPKKRMKNGSSLKSTSKKGEKSRN) is disordered. The N6-AMP-lysine intermediate role is filled by Lys433.

It belongs to the ATP-dependent DNA ligase family.

The protein resides in the nucleus. The enzyme catalyses ATP + (deoxyribonucleotide)n-3'-hydroxyl + 5'-phospho-(deoxyribonucleotide)m = (deoxyribonucleotide)n+m + AMP + diphosphate.. The chain is DNA ligase 3 (adl1) from Schizosaccharomyces pombe (strain 972 / ATCC 24843) (Fission yeast).